A 151-amino-acid chain; its full sequence is MTDLNVTQLGRVVDAPESPEAAVLERVPNPQSDVLYLARFVAPEFTSLCPVTGQPDFAHLVIDYAPGDWLIESKSLKLYLTSFRNHGSFHEDCTVKVARKIVEIAQPRWLRIGGYWYPRGGIPIDVFWQTGPAPEGLWVPDQGVAPYRGRG.

Cys-49 (thioimide intermediate) is an active-site residue. Asp-56 serves as the catalytic Proton donor. Substrate contacts are provided by residues 71-73 (IES) and 90-91 (HE).

The protein belongs to the GTP cyclohydrolase I family. QueF type 1 subfamily.

It localises to the cytoplasm. The enzyme catalyses 7-aminomethyl-7-carbaguanine + 2 NADP(+) = 7-cyano-7-deazaguanine + 2 NADPH + 3 H(+). It participates in tRNA modification; tRNA-queuosine biosynthesis. In terms of biological role, catalyzes the NADPH-dependent reduction of 7-cyano-7-deazaguanine (preQ0) to 7-aminomethyl-7-deazaguanine (preQ1). This is NADPH-dependent 7-cyano-7-deazaguanine reductase from Caulobacter vibrioides (strain ATCC 19089 / CIP 103742 / CB 15) (Caulobacter crescentus).